Consider the following 130-residue polypeptide: Large ribosomal subunit protein uL14 (130 aa).

The protein belongs to the universal ribosomal protein uL14 family. Part of the 50S ribosomal subunit. Forms a cluster with proteins L3 and L19. In the 70S ribosome, L14 and L19 interact and together make contacts with the 16S rRNA in bridges B5 and B8.

Functionally, binds to 23S rRNA. Forms part of two intersubunit bridges in the 70S ribosome. This is Large ribosomal subunit protein uL14 from Leptospira interrogans serogroup Icterohaemorrhagiae serovar copenhageni (strain Fiocruz L1-130).